A 292-amino-acid polypeptide reads, in one-letter code: Aquaporin-3 (292 aa).

The Cytoplasmic portion of the chain corresponds to 1-24 (MGRQKELVNRCGEMLHIRYRLLRQ). Residues 25–42 (ALAECLGTLILVMFGCGS) form a helical membrane-spanning segment. The Extracellular portion of the chain corresponds to 43–56 (VAQVVLSRGTHGGF). The chain crosses the membrane as a helical span at residues 57-74 (LTINLAFGFAVTLGILIA). The Cytoplasmic segment spans residues 75–78 (GQVS). Residues 79–92 (GAHLNPAVTFAMCF) constitute an intramembrane region (discontinuously helical). Residues 83 to 85 (NPA) carry the NPA 1 motif. Over 93–100 (LAREPWIK) the chain is Cytoplasmic. A helical transmembrane segment spans residues 101–121 (LPVYTLAQTLGAFLGAGIIFG). Over 122 to 159 (LYYDAIWAFANNQLIVSGPNGTAGIFATYPSGHLDMVN) the chain is Extracellular. The N-linked (GlcNAc...) asparagine glycan is linked to Asn-141. The chain crosses the membrane as a helical span at residues 160–177 (GFFDQFIGTASLIVCVLA). Over 178–189 (IVDPYNNPVPRG) the chain is Cytoplasmic. The helical transmembrane segment at 190–206 (LEAFTVGLVVLVIGTSM) threads the bilayer. The Extracellular segment spans residues 207–210 (GFNS). Residues 211–224 (GYAVNPARDFGPRL) constitute an intramembrane region (discontinuously helical). An NPA 2 motif is present at residues 215–217 (NPA). Topologically, residues 225–242 (FTAIAGWGSEVFTTGRHW) are extracellular. Residues 243-264 (WWVPIVSPLLGSIAGVFVYQLM) traverse the membrane as a helical segment. Residues 265–292 (IGCHLEPPPPSTDEENVKLSHVKHKEQM) lie on the Cytoplasmic side of the membrane.

Belongs to the MIP/aquaporin (TC 1.A.8) family. As to quaternary structure, homotetramer; each monomer provides an independent glycerol/water pore. Could also exist in other oligomeric states.

The protein resides in the cell membrane. It localises to the basolateral cell membrane. The enzyme catalyses glycerol(in) = glycerol(out). The catalysed reaction is H2O(in) = H2O(out). It carries out the reaction urea(in) = urea(out). It catalyses the reaction H2O2(out) = H2O2(in). In terms of biological role, aquaglyceroporins form homotetrameric transmembrane channels, with each monomer independently mediating glycerol and water transport across the plasma membrane along their osmotic gradient. Could also be permeable to urea. Also participates in cell permeability to H2O2 and H2O2-mediated signaling. In skin, transports glycerol to the epidermis and stratum corneum, where it maintains hydration, elasticity, and supports lipid biosynthesis for barrier repair. In kidney, contributes to the reabsorption of water, helping the body maintain proper fluid balance. This chain is Aquaporin-3, found in Bos taurus (Bovine).